A 581-amino-acid polypeptide reads, in one-letter code: Netrin-3 (581 aa).

An N-terminal signal peptide occupies residues 1–15; sequence LRLLLTTSVLRLARA. In terms of domain architecture, Laminin N-terminal spans 35–261; the sequence is APRRCIPEFV…SVGELQVGGR (227 aa). N-linked (GlcNAc...) asparagine glycosylation is found at Asn88 and Asn103. 15 disulfides stabilise this stretch: Cys91–Cys124, Cys262–Cys271, Cys264–Cys281, Cys283–Cys292, Cys295–Cys315, Cys318–Cys327, Cys320–Cys345, Cys348–Cys357, Cys360–Cys378, Cys381–Cys393, Cys383–Cys400, Cys402–Cys411, Cys414–Cys428, Cys449–Cys521, and Cys468–Cys578. Laminin EGF-like domains lie at 262–317, 318–380, and 381–430; these read CKCN…ECLA, CNCN…ACKA, and CDCH…PCIK. N-linked (GlcNAc...) asparagine glycosylation is present at Asn394. Positions 449-578 constitute an NTR domain; sequence CDSYCKPAKG…LQRREKKGKC (130 aa). The Cell attachment site motif lies at 507–509; the sequence is RGD. Asn540 carries an N-linked (GlcNAc...) asparagine glycan.

It localises to the secreted. Its subcellular location is the extracellular space. The protein resides in the extracellular matrix. Functionally, netrins control guidance of CNS commissural axons and peripheral motor axons. This is Netrin-3 (NTN3) from Gallus gallus (Chicken).